We begin with the raw amino-acid sequence, 446 residues long: N-succinylarginine dihydrolase (446 aa).

Residues 19-28 (AGLSFGNVAS), Asn110, and 137-138 (HR) contribute to the substrate site. Glu174 is a catalytic residue. Arg213 contacts substrate. His249 is a catalytic residue. 2 residues coordinate substrate: Asp251 and Asn364. Cys370 acts as the Nucleophile in catalysis.

It belongs to the succinylarginine dihydrolase family. As to quaternary structure, homodimer.

The enzyme catalyses N(2)-succinyl-L-arginine + 2 H2O + 2 H(+) = N(2)-succinyl-L-ornithine + 2 NH4(+) + CO2. It participates in amino-acid degradation; L-arginine degradation via AST pathway; L-glutamate and succinate from L-arginine: step 2/5. Its function is as follows. Catalyzes the hydrolysis of N(2)-succinylarginine into N(2)-succinylornithine, ammonia and CO(2). This is N-succinylarginine dihydrolase from Paraburkholderia xenovorans (strain LB400).